We begin with the raw amino-acid sequence, 425 residues long: Dihydroorotase (425 aa).

Zn(2+) contacts are provided by His61 and His63. Residues 63 to 65 and Asn95 each bind substrate; that span reads HLR. Zn(2+)-binding residues include Lys146, His175, His224, and Asp293. Position 146 is an N6-carboxylysine (Lys146). Asp293 is an active-site residue. Substrate-binding positions include His297 and 311–312; that span reads PG.

Belongs to the metallo-dependent hydrolases superfamily. DHOase family. Class I DHOase subfamily. Zn(2+) is required as a cofactor.

The catalysed reaction is (S)-dihydroorotate + H2O = N-carbamoyl-L-aspartate + H(+). The protein operates within pyrimidine metabolism; UMP biosynthesis via de novo pathway; (S)-dihydroorotate from bicarbonate: step 3/3. Its function is as follows. Catalyzes the reversible cyclization of carbamoyl aspartate to dihydroorotate. The protein is Dihydroorotase of Aeropyrum pernix (strain ATCC 700893 / DSM 11879 / JCM 9820 / NBRC 100138 / K1).